A 166-amino-acid chain; its full sequence is Ribosome maturation factor RimM (166 aa).

The region spanning 95-164 (EEEYYAYELV…KKIIVKEELL (70 aa)) is the PRC barrel domain.

Belongs to the RimM family. In terms of assembly, binds ribosomal protein uS19.

It localises to the cytoplasm. An accessory protein needed during the final step in the assembly of 30S ribosomal subunit, possibly for assembly of the head region. Essential for efficient processing of 16S rRNA. May be needed both before and after RbfA during the maturation of 16S rRNA. It has affinity for free ribosomal 30S subunits but not for 70S ribosomes. In Aquifex aeolicus (strain VF5), this protein is Ribosome maturation factor RimM.